We begin with the raw amino-acid sequence, 376 residues long: 1-acyl-sn-glycerol-3-phosphate acyltransferase 3 (376 aa).

The next 2 helical transmembrane spans lie at 14-34 and 49-69; these read VLFLISGLIVNIIQLVFFIIV and VAELLWLQLIWLFDWWACIKI. An HXXXXD motif motif is present at residues 92-97; that stretch reads HRSDID. 3 helical membrane passes run 98–118, 306–326, and 335–355; these read WLIGWVMAQRVGCLGSSLAIM, LIVVIIWLGFLVFGGFKLLQW, and IILLFVFFLVIATITMQILIQ.

The protein belongs to the 1-acyl-sn-glycerol-3-phosphate acyltransferase family. Predominantly expressed in pollen.

It localises to the membrane. The catalysed reaction is a 1-acyl-sn-glycero-3-phosphate + an acyl-CoA = a 1,2-diacyl-sn-glycero-3-phosphate + CoA. It functions in the pathway phospholipid metabolism; CDP-diacylglycerol biosynthesis; CDP-diacylglycerol from sn-glycerol 3-phosphate: step 2/3. Converts lysophosphatidic acid (LPA) into phosphatidic acid by incorporating acyl moiety at the 2 position. Has preference for C-18-CoA substrates compared to C-16-CoA substrates. The chain is 1-acyl-sn-glycerol-3-phosphate acyltransferase 3 (LPAT3) from Arabidopsis thaliana (Mouse-ear cress).